The chain runs to 165 residues: Fibrinogen-binding protein (165 aa).

A signal peptide spans 1–29 (MKNKLIAKSLLTIAAIGITTTTIASTADA).

In terms of assembly, interacts with host fibrinogen alpha chain/FGA. Interacts with host complement protein C3.

It localises to the secreted. Functionally, extracellular fibrinogen-binding protein that plays an important role in virulence. By interacting with the alpha chain of fibrinogen and its derivative fibrin, enhances a non-functional interaction between fibrinogen and platelets and is responsible for repression of fibrinogen-dependent platelet aggregation. In addition, assembles a fibrinogen protective shield around the bacteria which results in impaired phagocytic clearance by the host. Mechanistically, interacts with host complement C3b deposited on the surface of the bacterium via its C-terminal and then recruits fibrinogen via its N-terminal. The chain is Fibrinogen-binding protein (fib) from Staphylococcus aureus.